A 301-amino-acid chain; its full sequence is 33 kDa chaperonin (301 aa).

Cystine bridges form between Cys-240–Cys-242 and Cys-273–Cys-276.

This sequence belongs to the HSP33 family. Under oxidizing conditions two disulfide bonds are formed involving the reactive cysteines. Under reducing conditions zinc is bound to the reactive cysteines and the protein is inactive.

The protein resides in the cytoplasm. Redox regulated molecular chaperone. Protects both thermally unfolding and oxidatively damaged proteins from irreversible aggregation. Plays an important role in the bacterial defense system toward oxidative stress. This Rippkaea orientalis (strain PCC 8801 / RF-1) (Cyanothece sp. (strain PCC 8801)) protein is 33 kDa chaperonin.